Reading from the N-terminus, the 209-residue chain is MNYTKEVALSLLKIEAVRLRPEEPFKWASGWNSPIYCDNRLTLSFPESRNLIRDGLVDLIRTHYPACECIAGVATAGIPQGAIIADSMNLPMIYVRPKPKDHGMQNLIEGKITKGQKIVVVEDLISTGGSSLKAVEALQEGGFEILGMIGIFTYGFQIAEDNFKNAGITLHTLSNYDELIKEAVANNYVKQDQLQTLGEWRKNPGDWKK.

5-phospho-alpha-D-ribose 1-diphosphate contacts are provided by residues arginine 96, lysine 100, histidine 102, and glutamate 122–serine 130. Residue serine 126 participates in orotate binding.

This sequence belongs to the purine/pyrimidine phosphoribosyltransferase family. PyrE subfamily. As to quaternary structure, homodimer. Mg(2+) serves as cofactor.

It carries out the reaction orotidine 5'-phosphate + diphosphate = orotate + 5-phospho-alpha-D-ribose 1-diphosphate. It participates in pyrimidine metabolism; UMP biosynthesis via de novo pathway; UMP from orotate: step 1/2. Functionally, catalyzes the transfer of a ribosyl phosphate group from 5-phosphoribose 1-diphosphate to orotate, leading to the formation of orotidine monophosphate (OMP). This Cytophaga hutchinsonii (strain ATCC 33406 / DSM 1761 / CIP 103989 / NBRC 15051 / NCIMB 9469 / D465) protein is Orotate phosphoribosyltransferase.